Reading from the N-terminus, the 233-residue chain is B-cell lymphoma/leukemia 10 (233 aa).

Methionine 1 carries the N-acetylmethionine modification. Residues 13–101 form the CARD domain; sequence LTEVKKDALE…QNFLIQKITD (89 aa). Glycyl lysine isopeptide (Lys-Gly) (interchain with G-Cter in ubiquitin) cross-links involve residues lysine 17, lysine 31, and lysine 63. Residues 130-141 are compositionally biased toward polar residues; the sequence is TNNLSRSNSDES. Disordered stretches follow at residues 130 to 149 and 186 to 233; these read TNNL…KQRP and SFSS…LSRQ. Serine 138 bears the Phosphoserine mark. Residues 195–205 are compositionally biased toward pro residues; the sequence is PGDPGAPPLPP.

In terms of assembly, homomultimer; homooligomerized following recruitment by CARD domain-containing proteins that form a nucleating helical template that recruits BCL10 via CARD-CARD interaction. Self-associates by CARD-CARD interaction and interacts with other CARD-proteins such as CARD9, CARD10, CARD11 and CARD14. Forms a complex with CARD14 and MALT1; resulting in the formation of a CBM (CARD14-BCL10-MALT1) complex. Forms a complex with CARD11 and MALT1; resulting in the formation of a CBM (CARD11-BCL10-MALT1) complex. Forms a complex with CARD9 and MALT1; resulting in the formation of a CBM (CARD9-BCL10-MALT1) complex. Found in a membrane raft complex, at least composed of BCL10, CARD11, DPP4 and IKBKB. Binds caspase-9 with its C-terminal domain. Interacts with TRAF2 and BIRC2/c-IAP2. Interacts with PELI2 and SOCS3; these interactions may be mutually exclusive. Post-translationally, phosphorylated. Phosphorylation results in dissociation from TRAF2 and binding to BIRC2/c-IAP2. Phosphorylated by IKBKB/IKKB. Ubiquitinated via both 'Lys-63'-linked and linear ('Met-1'-linked) polyubiquitin chains in response to T-cell receptor (TCR) activation. Ubiquitination is recognized by IKBKG/NEMO, the regulatory subunit of I-kappa-B kinase (IKK), and is required for TCR-induced NF-kappa-B activation. Linear ubiquitination at Lys-17, Lys-31 and Lys-63 is mediated by RNF31/HOIP; linear ubiquitination is recognized with much higher affinity than 'Lys-63'-linked ubiquitin by IKBKG/NEMO. CARD11 is required for linear ubiquitination by HOIP by promoting the targeting of BCL10 to RNF31/HOIP. In terms of processing, proteolytically cleaved by MALT1; required for T-cell activation.

The protein localises to the cytoplasm. It localises to the perinuclear region. The protein resides in the membrane raft. Plays a key role in both adaptive and innate immune signaling by bridging CARD domain-containing proteins to immune activation. Acts by channeling adaptive and innate immune signaling downstream of CARD domain-containing proteins CARD9, CARD11 and CARD14 to activate NF-kappa-B and MAP kinase p38 (MAPK11, MAPK12, MAPK13 and/or MAPK14) pathways which stimulate expression of genes encoding pro-inflammatory cytokines and chemokines. Recruited by activated CARD domain-containing proteins: homooligomerized CARD domain-containing proteins form a nucleating helical template that recruits BCL10 via CARD-CARD interaction, thereby promoting polymerization of BCL10, subsequent recruitment of MALT1 and formation of a CBM complex. This leads to activation of NF-kappa-B and MAP kinase p38 (MAPK11, MAPK12, MAPK13 and/or MAPK14) pathways which stimulate expression of genes encoding pro-inflammatory cytokines and chemokines. Activated by CARD9 downstream of C-type lectin receptors; CARD9-mediated signals are essential for antifungal immunity. Activated by CARD11 downstream of T-cell receptor (TCR) and B-cell receptor (BCR). Promotes apoptosis, pro-caspase-9 maturation and activation of NF-kappa-B via NIK and IKK. The chain is B-cell lymphoma/leukemia 10 from Rattus norvegicus (Rat).